The sequence spans 193 residues: Mediator of RNA polymerase II transcription subunit 30 (193 aa).

Residues 1 to 20 (MSTPPLAASGMAPGPFAGPQ) form a disordered region. Ser-2 is modified (N-acetylserine). Residues 10-20 (GMAPGPFAGPQ) show a composition bias toward low complexity. Residues 71–93 (YQDRLAKLQDHLRQLSILFRKLR) are a coiled coil.

It belongs to the Mediator complex subunit 30 family. As to quaternary structure, component of the Mediator complex, which is composed of MED1, MED4, MED6, MED7, MED8, MED9, MED10, MED11, MED12, MED13, MED13L, MED14, MED15, MED16, MED17, MED18, MED19, MED20, MED21, MED22, MED23, MED24, MED25, MED26, MED27, MED29, MED30, MED31, CCNC, CDK8 and CDC2L6/CDK11. The MED12, MED13, CCNC and CDK8 subunits form a distinct module termed the CDK8 module. Mediator containing the CDK8 module is less active than Mediator lacking this module in supporting transcriptional activation. Individual preparations of the Mediator complex lacking one or more distinct subunits have been variously termed ARC, CRSP, DRIP, PC2, SMCC and TRAP.

It localises to the nucleus. Functionally, component of the Mediator complex, a coactivator involved in the regulated transcription of nearly all RNA polymerase II-dependent genes. Mediator functions as a bridge to convey information from gene-specific regulatory proteins to the basal RNA polymerase II transcription machinery. Mediator is recruited to promoters by direct interactions with regulatory proteins and serves as a scaffold for the assembly of a functional preinitiation complex with RNA polymerase II and the general transcription factors. The sequence is that of Mediator of RNA polymerase II transcription subunit 30 (MED30) from Bos taurus (Bovine).